The following is a 501-amino-acid chain: Actin nucleation-promoting factor WASL (501 aa).

Ser2 carries the post-translational modification N-acetylserine. One can recognise a WH1 domain in the interval 31–138; that stretch reads LGKKCVTMSS…KAVTDLLGRR (108 aa). 2 disordered regions span residues 135 to 158 and 180 to 202; these read LGRR…PMAT and SHTK…DIGT. Residues 183 to 195 show a composition bias toward basic residues; that stretch reads KEKKKGKAKKKRL. One can recognise a CRIB domain in the interval 200 to 213; that stretch reads IGTPSNFQHIGHVG. Ser239 is subject to Phosphoserine; by TNK2. The residue at position 253 (Tyr253) is a Phosphotyrosine; by FAK1 and TNK2. 2 disordered regions span residues 263–405 and 442–501; these read EAVK…KAAL and QLKS…EWED. Pro residues-rich tracts occupy residues 273–361 and 368–387; these read APPP…PPPL and APPP…PPGL. Omega-N-methylarginine is present on Arg304. WH2 domains are found at residues 401–418 and 429–446; these read NKAA…LKKV and GRDA…LKSV. Polar residues predominate over residues 442–453; that stretch reads QLKSVSDGQEST. 2 positions are modified to phosphoserine: Ser480 and Ser481. Residues 482–501 are compositionally biased toward acidic residues; sequence DEDEDDDDEEDFQDDDEWED.

Binds actin and the Arp2/3 complex. Interacts with CDC42. Interacts with FCHSD1. Interacts with FCHSD2. Binds to SH3 domains of GRB2. Interacts with the C-terminal SH3 domain of DNMBP. Interacts with SNX9. Interacts with the WW domains of PRPF40A/FBP11. Interacts with PTK2/FAK1. Interacts with PACSIN1, PACSIN2 and PACSIN3. Interacts with NOSTRIN. Binds to TNK2. Interacts with SNX33. Interacts with NONO (via second RRM domain); the interaction is direct. Component of a multiprotein complex with NONO and SFPQ; associates with the complex via direct interaction with NONO. In terms of processing, phosphorylation at Ser-239, Tyr-253, Ser-480 and Ser-481 enhances actin polymerization activity.

Its subcellular location is the cytoplasm. The protein resides in the cytoskeleton. It localises to the nucleus. Its function is as follows. Regulates actin polymerization by stimulating the actin-nucleating activity of the Arp2/3 complex. Involved in various processes, such as mitosis and cytokinesis, via its role in the regulation of actin polymerization. Together with CDC42, involved in the extension and maintenance of the formation of thin, actin-rich surface projections called filopodia. In addition to its role in the cytoplasm, also plays a role in the nucleus by regulating gene transcription, probably by promoting nuclear actin polymerization. Binds to HSF1/HSTF1 and forms a complex on heat shock promoter elements (HSE) that negatively regulates HSP90 expression. Plays a role in dendrite spine morphogenesis. In Rattus norvegicus (Rat), this protein is Actin nucleation-promoting factor WASL (Wasl).